The sequence spans 415 residues: MKGSYKSRWVIVIVVVIAAIAAFWFWQGRNDSRSAAPGATKQAQQSPAGGRRGMRSGPLAPVQAATAVEQAVPRYLTGLGTITAANTVTVRSRVDGQLIALHFQEGQQVKAGDLLAEIDPSQFKVALAQAQGQLAKDKATLANARRDLARYQQLAKTNLVSRQELDAQQALVSETEGTIKADEASVASAQLQLDWSRITAPVDGRVGLKQVDVGNQISSGDTTGIVVITQTHPIDLVFTLPESDIATVVQAQKAGKPLVVEAWDRTNSKKLSEGTLLSLDNQIDATTGTIKVKARFNNQDDALFPNQFVNARMLVDTEQNAVVIPTAALQMGNEGHFVWVLNSENKVSKHLVTPGIQDSQKVVIRAGISAGDRVVTDGIDRLTEGAKVEVVEAQSATTPEEKATSREYAKKGARS.

The N-terminal stretch at 1 to 21 (MKGSYKSRWVIVIVVVIAAIA) is a signal peptide. Disordered stretches follow at residues 32–60 (SRSA…GPLA) and 392–415 (EAQS…GARS). Residues 399–415 (PEEKATSREYAKKGARS) show a composition bias toward basic and acidic residues.

The protein belongs to the membrane fusion protein (MFP) (TC 8.A.1) family. As to quaternary structure, part of a tripartite efflux system composed of MdtA, MdtB and MdtC.

It localises to the cell inner membrane. Functionally, the MdtABC tripartite complex confers resistance against novobiocin and deoxycholate. The chain is Multidrug resistance protein MdtA from Escherichia coli (strain K12 / MC4100 / BW2952).